The chain runs to 149 residues: Nucleoside diphosphate kinase (149 aa).

The ATP site is built by lysine 9, phenylalanine 57, arginine 85, threonine 91, arginine 102, and asparagine 112. Histidine 115 serves as the catalytic Pros-phosphohistidine intermediate.

The protein belongs to the NDK family. In terms of assembly, homotetramer. Mg(2+) is required as a cofactor.

It localises to the cytoplasm. The enzyme catalyses a 2'-deoxyribonucleoside 5'-diphosphate + ATP = a 2'-deoxyribonucleoside 5'-triphosphate + ADP. It catalyses the reaction a ribonucleoside 5'-diphosphate + ATP = a ribonucleoside 5'-triphosphate + ADP. Its function is as follows. Major role in the synthesis of nucleoside triphosphates other than ATP. The ATP gamma phosphate is transferred to the NDP beta phosphate via a ping-pong mechanism, using a phosphorylated active-site intermediate. In Pelotomaculum thermopropionicum (strain DSM 13744 / JCM 10971 / SI), this protein is Nucleoside diphosphate kinase.